The sequence spans 144 residues: Deoxyuridine 5'-triphosphate nucleotidohydrolase (144 aa).

Positions 66, 133, 138, and 139 each coordinate dUMP.

This sequence belongs to the dUTPase family. Homotrimer. The cofactor is Mg(2+).

It carries out the reaction dUTP + H2O = dUMP + diphosphate + H(+). It functions in the pathway pyrimidine metabolism; dUMP biosynthesis; dUMP from dCTP (dUTP route): step 2/2. Involved in nucleotide metabolism via production of dUMP, the immediate precursor of thymidine nucleotides, and decreases the intracellular concentration of dUTP so that uracil cannot be incorporated into DNA. This chain is Deoxyuridine 5'-triphosphate nucleotidohydrolase (DUT1), found in Encephalitozoon cuniculi (strain GB-M1) (Microsporidian parasite).